The primary structure comprises 1840 residues: Sodium channel protein type 4 subunit alpha (1840 aa).

Residues methionine 1–alanine 131 lie on the Cytoplasmic side of the membrane. Residues glutamate 36–alanine 60 show a composition bias toward basic and acidic residues. The tract at residues glutamate 36–asparagine 63 is disordered. The stretch at leucine 113–asparagine 448 is one I repeat. Residues leucine 132–methionine 150 form a helical membrane-spanning segment. The Extracellular segment spans residues serine 151–serine 157. Residues lysine 158 to alanine 178 form a helical membrane-spanning segment. Residues arginine 179–proline 192 are Cytoplasmic-facing. A helical membrane pass occupies residues tryptophan 193–valine 210. Residues aspartate 211–serine 216 lie on the Extracellular side of the membrane. Residues alanine 217–isoleucine 233 traverse the membrane as a helical segment. The Cytoplasmic segment spans residues proline 234 to aspartate 252. Residues valine 253 to phenylalanine 272 form a helical membrane-spanning segment. Topologically, residues methionine 273–threonine 385 are extracellular. An intrachain disulfide couples cysteine 280 to cysteine 354. 8 N-linked (GlcNAc...) asparagine glycosylation sites follow: asparagine 288, asparagine 291, asparagine 297, asparagine 303, asparagine 309, asparagine 315, asparagine 327, and asparagine 356. An intrachain disulfide couples cysteine 363 to cysteine 369. The segment at residues phenylalanine 386–leucine 410 is an intramembrane region (pore-forming). The Extracellular portion of the chain corresponds to arginine 411 to tyrosine 417. A helical transmembrane segment spans residues methionine 418–alanine 438. The Cytoplasmic portion of the chain corresponds to valine 439–proline 572. Positions alanine 481–serine 522 are disordered. Serine 487 carries the phosphoserine modification. An II repeat occupies cysteine 554–glycine 826. Residues phenylalanine 573–methionine 591 traverse the membrane as a helical segment. The Extracellular segment spans residues glutamate 592–asparagine 602. Residues valine 603–lysine 622 traverse the membrane as a helical segment. At leucine 623–tryptophan 636 the chain is on the cytoplasmic side. The chain crosses the membrane as a helical span at residues asparagine 637 to valine 656. At glutamine 657–glycine 658 the chain is on the extracellular side. Residues leucine 659–serine 676 traverse the membrane as a helical segment. At tryptophan 677–glycine 692 the chain is on the cytoplasmic side. Residues alanine 693–valine 711 traverse the membrane as a helical segment. Residues glycine 712–aspartate 740 are Extracellular-facing. A disulfide bridge connects residues cysteine 725 and cysteine 731. Residues phenylalanine 741–tryptophan 761 constitute an intramembrane region (pore-forming). Over aspartate 762–cysteine 772 the chain is Extracellular. Residues cysteine 763 and cysteine 772 are joined by a disulfide bond. Residues leucine 773–phenylalanine 791 traverse the membrane as a helical segment. Topologically, residues leucine 792 to tryptophan 1025 are cytoplasmic. Disordered regions lie at residues glutamate 854–asparagine 884 and aspartate 925–proline 983. A compositionally biased stretch (basic and acidic residues) spans glutamate 868–asparagine 884. Composition is skewed to acidic residues over residues aspartate 925 to proline 940 and glutamate 968 to proline 983. One copy of the III repeat lies at arginine 1006–leucine 1319. The helical transmembrane segment at phenylalanine 1026–phenylalanine 1043 threads the bilayer. Residues glutamate 1044–threonine 1056 lie on the Extracellular side of the membrane. Residues isoleucine 1057–leucine 1075 traverse the membrane as a helical segment. Residues lysine 1076–alanine 1089 are Cytoplasmic-facing. The chain crosses the membrane as a helical span at residues tryptophan 1090 to asparagine 1108. Over tryptophan 1109–glycine 1116 the chain is Extracellular. The chain crosses the membrane as a helical span at residues proline 1117–arginine 1135. At phenylalanine 1136–serine 1152 the chain is on the cytoplasmic side. The chain crosses the membrane as a helical span at residues isoleucine 1153–valine 1172. Residues asparagine 1173 to valine 1223 are Extracellular-facing. Asparagine 1198 carries an N-linked (GlcNAc...) asparagine glycan. The pore-forming intramembrane region spans glycine 1224–alanine 1245. Residues alanine 1246–leucine 1262 are Extracellular-facing. The chain crosses the membrane as a helical span at residues tyrosine 1263–isoleucine 1284. Residues glycine 1285 to valine 1347 lie on the Cytoplasmic side of the membrane. The tract at residues isoleucine 1303–methionine 1305 is important for rapid channel inactivation. The IV repeat unit spans residues isoleucine 1328–glutamine 1626. The helical transmembrane segment at phenylalanine 1348 to valine 1365 threads the bilayer. Residues glutamate 1366 to aspartate 1376 lie on the Extracellular side of the membrane. The helical transmembrane segment at isoleucine 1377 to leucine 1395 threads the bilayer. Topologically, residues lysine 1396–isoleucine 1407 are cytoplasmic. Residues glycine 1408–alanine 1425 traverse the membrane as a helical segment. Over leucine 1426–threonine 1438 the chain is Extracellular. The chain crosses the membrane as a helical span at residues leucine 1439–isoleucine 1455. The Cytoplasmic segment spans residues arginine 1456–alanine 1474. The chain crosses the membrane as a helical span at residues leucine 1475–phenylalanine 1492. Over glycine 1493–threonine 1514 the chain is Extracellular. The pore-forming intramembrane region spans phenylalanine 1515 to proline 1537. Residues isoleucine 1538–glycine 1567 lie on the Extracellular side of the membrane. Cysteines 1546 and 1561 form a disulfide. The chain crosses the membrane as a helical span at residues isoleucine 1568–isoleucine 1590. Over leucine 1591 to valine 1840 the chain is Cytoplasmic. The IQ domain maps to glutamate 1720–histidine 1749. Residues histidine 1775 to valine 1840 are disordered. Residues proline 1804–threonine 1813 show a composition bias toward low complexity. The span at proline 1814 to serine 1824 shows a compositional bias: pro residues.

This sequence belongs to the sodium channel (TC 1.A.1.10) family. Nav1.4/SCN4A subfamily. The Nav1.4 voltage-gated sodium channel consists of an ion-conducting alpha subunit SCN4A which is functional on its own and a regulatory beta subunit SCN1B. SCN1B strongly enhances the presence of SCN4A at the cell surface. SCN1B is also required for rapid channel inactivation and recovery after inactivation. It prevents the decrease of channel activity in response to repetitive, high-frequency depolarizations. Interacts with the syntrophins SNTA1, SNTB1 and SNTB2 (via PDZ domain); probably links SCN4A to the actin cytoskeleton and the extracellular matrix via the dystrophin-associated protein complex and regulates its localization in muscle cells. Interacts with TMEM233; probable regulator of the channel. In terms of tissue distribution, detected in skeletal muscle.

It is found in the cell membrane. It catalyses the reaction Na(+)(in) = Na(+)(out). With respect to regulation, potently inhibited by tetrodotoxin and saxitoxin. Inhibited by the conotoxin GVIIJ. Its function is as follows. Pore-forming subunit of Nav1.4, a voltage-gated sodium (Nav) channel that directly mediates the depolarizing phase of action potentials in excitable membranes. Navs, also called VGSCs (voltage-gated sodium channels) or VDSCs (voltage-dependent sodium channels), operate by switching between closed and open conformations depending on the voltage difference across the membrane. In the open conformation they allow Na(+) ions to selectively pass through the pore, along their electrochemical gradient. The influx of Na+ ions provokes membrane depolarization, initiating the propagation of electrical signals throughout cells and tissues. Highly expressed in skeletal muscles, Nav1.4 generates the action potential crucial for muscle contraction. The protein is Sodium channel protein type 4 subunit alpha of Rattus norvegicus (Rat).